Here is a 175-residue protein sequence, read N- to C-terminus: Ribosome maturation factor RimM (175 aa).

The 80-residue stretch at 96 to 175 folds into the PRC barrel domain; it reads EGDYYWHDLI…TIEVDWDAGF (80 aa).

It belongs to the RimM family. As to quaternary structure, binds ribosomal protein uS19.

The protein localises to the cytoplasm. Its function is as follows. An accessory protein needed during the final step in the assembly of 30S ribosomal subunit, possibly for assembly of the head region. Essential for efficient processing of 16S rRNA. May be needed both before and after RbfA during the maturation of 16S rRNA. It has affinity for free ribosomal 30S subunits but not for 70S ribosomes. The sequence is that of Ribosome maturation factor RimM from Haemophilus influenzae (strain PittEE).